The chain runs to 1336 residues: Coiled-coil and C2 domain-containing protein 2A (1336 aa).

Disordered regions lie at residues methionine 1–valine 29 and valine 70–isoleucine 97. Residues lysine 8–arginine 23 are compositionally biased toward basic residues. Positions valine 70–threonine 89 are enriched in acidic residues. A coiled-coil region spans residues leucine 136–glutamine 156. The C2 domain occupies proline 755 to isoleucine 915.

As to quaternary structure, probable component of the tectonic-like complex (also named MKS complex), composed of B9d1, B9d2, Cc2d2a, Mks1 and tctn. In terms of tissue distribution, expressed in the antennae of chordotonal neurons and male germ cells (at protein level).

The protein localises to the cytoplasm. The protein resides in the cytoskeleton. It is found in the cilium basal body. It localises to the microtubule organizing center. Its subcellular location is the centrosome. The protein localises to the centriole. Its function is as follows. Probable component of the tectonic-like complex (also named MKS complex), a complex localized at the transition zone of primary cilia. Required for ciliary structure and function. This chain is Coiled-coil and C2 domain-containing protein 2A, found in Drosophila melanogaster (Fruit fly).